The sequence spans 115 residues: uncharacterized protein (115 aa).

This is an uncharacterized protein from Gallus gallus (Chicken).